Reading from the N-terminus, the 173-residue chain is Photosystem I assembly protein Ycf3 (173 aa).

TPR repeat units lie at residues 35–68 (AYLYYRKGLAAQNDGDYSEALEYYEESLKLEDNQ), 72–105 (GETLKNMAIIYMSNGDEERAINTYKKALGQNPKQ), and 120–153 (GRMAQRNGNQDECDIWFDQAAEVWSKAVRLYPGG).

The protein belongs to the Ycf3 family.

It is found in the cellular thylakoid membrane. Functionally, essential for the assembly of the photosystem I (PSI) complex. May act as a chaperone-like factor to guide the assembly of the PSI subunits. This chain is Photosystem I assembly protein Ycf3, found in Prochlorococcus marinus (strain NATL2A).